Here is a 307-residue protein sequence, read N- to C-terminus: Ribonuclease Z (307 aa).

Residues His-63, His-65, Asp-67, His-68, His-141, Asp-212, and His-270 each coordinate Zn(2+). Asp-67 acts as the Proton acceptor in catalysis.

It belongs to the RNase Z family. As to quaternary structure, homodimer. Zn(2+) serves as cofactor.

The enzyme catalyses Endonucleolytic cleavage of RNA, removing extra 3' nucleotides from tRNA precursor, generating 3' termini of tRNAs. A 3'-hydroxy group is left at the tRNA terminus and a 5'-phosphoryl group is left at the trailer molecule.. Its function is as follows. Zinc phosphodiesterase, which displays some tRNA 3'-processing endonuclease activity. Probably involved in tRNA maturation, by removing a 3'-trailer from precursor tRNA. This chain is Ribonuclease Z, found in Bacillus cereus (strain G9842).